The primary structure comprises 182 residues: Large ribosomal subunit protein uL5 (182 aa).

This sequence belongs to the universal ribosomal protein uL5 family. As to quaternary structure, part of the 50S ribosomal subunit; part of the 5S rRNA/L5/L18/L25 subcomplex. Contacts the 5S rRNA and the P site tRNA. Forms a bridge to the 30S subunit in the 70S ribosome.

Functionally, this is one of the proteins that bind and probably mediate the attachment of the 5S RNA into the large ribosomal subunit, where it forms part of the central protuberance. In the 70S ribosome it contacts protein S13 of the 30S subunit (bridge B1b), connecting the 2 subunits; this bridge is implicated in subunit movement. Contacts the P site tRNA; the 5S rRNA and some of its associated proteins might help stabilize positioning of ribosome-bound tRNAs. This Borrelia turicatae (strain 91E135) protein is Large ribosomal subunit protein uL5.